The following is a 217-amino-acid chain: Ribosomal RNA small subunit methyltransferase G (217 aa).

S-adenosyl-L-methionine-binding positions include glycine 74, leucine 79, 125-126 (IQ), and arginine 143.

The protein belongs to the methyltransferase superfamily. RNA methyltransferase RsmG family.

The protein localises to the cytoplasm. The enzyme catalyses guanosine(527) in 16S rRNA + S-adenosyl-L-methionine = N(7)-methylguanosine(527) in 16S rRNA + S-adenosyl-L-homocysteine. In terms of biological role, specifically methylates the N7 position of guanine in position 527 of 16S rRNA. The polypeptide is Ribosomal RNA small subunit methyltransferase G (Syntrophotalea carbinolica (strain DSM 2380 / NBRC 103641 / GraBd1) (Pelobacter carbinolicus)).